The primary structure comprises 447 residues: Argininosuccinate synthase (447 aa).

ATP-binding positions include Ala17–Ser25 and Ala43. L-citrulline is bound at residue Tyr99. Residues Gly129 and Thr131 each contribute to the ATP site. L-aspartate-binding residues include Thr131, Asn135, and Asp136. Asn135 contacts L-citrulline. Asp136 is an ATP binding site. L-citrulline contacts are provided by Arg139 and Ser192. ATP is bound at residue Asp194. Thr201, Glu203, and Glu280 together coordinate L-citrulline.

It belongs to the argininosuccinate synthase family. Type 2 subfamily. As to quaternary structure, homotetramer.

The protein resides in the cytoplasm. It catalyses the reaction L-citrulline + L-aspartate + ATP = 2-(N(omega)-L-arginino)succinate + AMP + diphosphate + H(+). The protein operates within amino-acid biosynthesis; L-arginine biosynthesis; L-arginine from L-ornithine and carbamoyl phosphate: step 2/3. This Citrobacter koseri (strain ATCC BAA-895 / CDC 4225-83 / SGSC4696) protein is Argininosuccinate synthase.